Here is a 308-residue protein sequence, read N- to C-terminus: Methionyl-tRNA formyltransferase (308 aa).

109-112 (SLLP) contributes to the (6S)-5,6,7,8-tetrahydrofolate binding site.

Belongs to the Fmt family.

It carries out the reaction L-methionyl-tRNA(fMet) + (6R)-10-formyltetrahydrofolate = N-formyl-L-methionyl-tRNA(fMet) + (6S)-5,6,7,8-tetrahydrofolate + H(+). Its function is as follows. Attaches a formyl group to the free amino group of methionyl-tRNA(fMet). The formyl group appears to play a dual role in the initiator identity of N-formylmethionyl-tRNA by promoting its recognition by IF2 and preventing the misappropriation of this tRNA by the elongation apparatus. In Salinispora tropica (strain ATCC BAA-916 / DSM 44818 / JCM 13857 / NBRC 105044 / CNB-440), this protein is Methionyl-tRNA formyltransferase.